Here is a 260-residue protein sequence, read N- to C-terminus: Ribonuclease HII (260 aa).

The RNase H type-2 domain maps to leucine 73–valine 260. A divalent metal cation-binding residues include aspartate 79, glutamate 80, and aspartate 171.

This sequence belongs to the RNase HII family. Mn(2+) is required as a cofactor. Requires Mg(2+) as cofactor.

It is found in the cytoplasm. It carries out the reaction Endonucleolytic cleavage to 5'-phosphomonoester.. Its function is as follows. Endonuclease that specifically degrades the RNA of RNA-DNA hybrids. The sequence is that of Ribonuclease HII from Desulfitobacterium hafniense (strain Y51).